The sequence spans 515 residues: ATP synthase subunit alpha (515 aa).

Residue 171 to 178 (GDRQTGKT) coordinates ATP.

This sequence belongs to the ATPase alpha/beta chains family. In terms of assembly, F-type ATPases have 2 components, CF(1) - the catalytic core - and CF(0) - the membrane proton channel. CF(1) has five subunits: alpha(3), beta(3), gamma(1), delta(1), epsilon(1). CF(0) has three main subunits: a(1), b(2) and c(9-12). The alpha and beta chains form an alternating ring which encloses part of the gamma chain. CF(1) is attached to CF(0) by a central stalk formed by the gamma and epsilon chains, while a peripheral stalk is formed by the delta and b chains.

It localises to the cell inner membrane. It catalyses the reaction ATP + H2O + 4 H(+)(in) = ADP + phosphate + 5 H(+)(out). Functionally, produces ATP from ADP in the presence of a proton gradient across the membrane. The alpha chain is a regulatory subunit. The polypeptide is ATP synthase subunit alpha (Xanthomonas axonopodis pv. citri (strain 306)).